Reading from the N-terminus, the 275-residue chain is NH(3)-dependent NAD(+) synthetase (275 aa).

Position 50–57 (50–57) interacts with ATP; it reads GISGGVDS. Residue D56 participates in Mg(2+) binding. R147 contacts deamido-NAD(+). T167 serves as a coordination point for ATP. E172 is a binding site for Mg(2+). K180 and D187 together coordinate deamido-NAD(+). K196 and T218 together coordinate ATP. A deamido-NAD(+)-binding site is contributed by 267 to 268; that stretch reads HK.

Belongs to the NAD synthetase family. Homodimer.

It carries out the reaction deamido-NAD(+) + NH4(+) + ATP = AMP + diphosphate + NAD(+) + H(+). Its pathway is cofactor biosynthesis; NAD(+) biosynthesis; NAD(+) from deamido-NAD(+) (ammonia route): step 1/1. Catalyzes the ATP-dependent amidation of deamido-NAD to form NAD. Uses ammonia as a nitrogen source. The chain is NH(3)-dependent NAD(+) synthetase from Pseudomonas putida (strain GB-1).